Consider the following 349-residue polypeptide: Phenylalanine--tRNA ligase alpha subunit (349 aa).

Glu-261 contacts Mg(2+).

It belongs to the class-II aminoacyl-tRNA synthetase family. Phe-tRNA synthetase alpha subunit type 1 subfamily. Tetramer of two alpha and two beta subunits. The cofactor is Mg(2+).

The protein localises to the cytoplasm. The enzyme catalyses tRNA(Phe) + L-phenylalanine + ATP = L-phenylalanyl-tRNA(Phe) + AMP + diphosphate + H(+). This Leuconostoc citreum (strain KM20) protein is Phenylalanine--tRNA ligase alpha subunit.